The primary structure comprises 237 residues: 4'-phosphopantetheinyl transferase HetI (237 aa).

Mg(2+) is bound by residues Asp-128, Glu-130, and Glu-174.

This sequence belongs to the P-Pant transferase superfamily. Gsp/Sfp/HetI/AcpT family. Mg(2+) is required as a cofactor.

It catalyses the reaction apo-[peptidyl-carrier protein] + CoA = holo-[peptidyl-carrier protein] + adenosine 3',5'-bisphosphate + H(+). Its function is as follows. Probably activates the acyl carrier protein (ACP) domain of HetM, by transferring the 4'-phosphopantetheinyl moiety of coenzyme A (CoA) to a serine residue. May be required for maintaining vegetative growth and probably acts via HetN to inhibit differentiation. This chain is 4'-phosphopantetheinyl transferase HetI (hetI), found in Nostoc sp. (strain PCC 7120 / SAG 25.82 / UTEX 2576).